The primary structure comprises 129 residues: Small ribosomal subunit protein uS11 (129 aa).

The protein belongs to the universal ribosomal protein uS11 family. As to quaternary structure, part of the 30S ribosomal subunit. Interacts with proteins S7 and S18. Binds to IF-3.

Located on the platform of the 30S subunit, it bridges several disparate RNA helices of the 16S rRNA. Forms part of the Shine-Dalgarno cleft in the 70S ribosome. The protein is Small ribosomal subunit protein uS11 of Hahella chejuensis (strain KCTC 2396).